Consider the following 295-residue polypeptide: UTP--glucose-1-phosphate uridylyltransferase (295 aa).

This sequence belongs to the UDPGP type 2 family.

It carries out the reaction alpha-D-glucose 1-phosphate + UTP + H(+) = UDP-alpha-D-glucose + diphosphate. May play a role in stationary phase survival. The protein is UTP--glucose-1-phosphate uridylyltransferase (galU) of Haemophilus influenzae (strain ATCC 51907 / DSM 11121 / KW20 / Rd).